Here is a 20-residue protein sequence, read N- to C-terminus: Chemoheterotroph-specific protein (20 aa).

This Thiomonas delicata (Thiomonas cuprina) protein is Chemoheterotroph-specific protein.